The chain runs to 121 residues: UPF0102 protein BVU_1879 (121 aa).

The protein belongs to the UPF0102 family.

This is UPF0102 protein BVU_1879 from Phocaeicola vulgatus (strain ATCC 8482 / DSM 1447 / JCM 5826 / CCUG 4940 / NBRC 14291 / NCTC 11154) (Bacteroides vulgatus).